Consider the following 188-residue polypeptide: Ribosome-recycling factor (188 aa).

The protein belongs to the RRF family.

Its subcellular location is the cytoplasm. Responsible for the release of ribosomes from messenger RNA at the termination of protein biosynthesis. May increase the efficiency of translation by recycling ribosomes from one round of translation to another. In Anaeromyxobacter sp. (strain K), this protein is Ribosome-recycling factor.